The following is a 101-amino-acid chain: Chaperone modulatory protein CbpM (101 aa).

Belongs to the CbpM family.

Functionally, interacts with CbpA and inhibits both the DnaJ-like co-chaperone activity and the DNA binding activity of CbpA. Together with CbpA, modulates the activity of the DnaK chaperone system. Does not inhibit the co-chaperone activity of DnaJ. This is Chaperone modulatory protein CbpM from Pseudomonas putida (strain GB-1).